The sequence spans 68 residues: Small ribosomal subunit protein bS21 (68 aa).

It belongs to the bacterial ribosomal protein bS21 family.

This Ruegeria pomeroyi (strain ATCC 700808 / DSM 15171 / DSS-3) (Silicibacter pomeroyi) protein is Small ribosomal subunit protein bS21.